The following is a 124-amino-acid chain: CLAVATA3/ESR (CLE)-related protein 45 (124 aa).

The N-terminal stretch at 1–20 is a signal peptide; sequence MLGSSTRSMFFLLVCIGLLA. Residues Asn-25 and Asn-96 are each glycosylated (N-linked (GlcNAc...) asparagine). Residues 71–109 are a coiled coil; sequence LNKNRRVLEEVNKDKIKAEETQERKNKTEDSFKSSKRRV. Residues 87 to 103 are compositionally biased toward basic and acidic residues; sequence KAEETQERKNKTEDSFK. Positions 87-124 are disordered; it reads KAEETQERKNKTEDSFKSSKRRVRRGSDPIHNKAQPFS.

This sequence belongs to the CLV3/ESR signal peptide family. Binds to SKM1 present in the pollen grain, particularly under relatively high temperature (at 30 degrees Celsius). Interacts with BAM3, especially in roots. In terms of tissue distribution, expressed at low levels in flowers, especially in pistils. Present in vascular tissues. In roots, confined to protophloem and sieve element precursor cells.

The protein resides in the secreted. Its subcellular location is the extracellular space. In terms of biological role, extracellular signal peptide that regulates cell fate. Represses root apical meristem maintenance. Represses protophloem differentiation in a BAM3-dependent manner. BRX, BAM3, and CLE45 act together to regulate the transition of protophloem cells from proliferation to differentiation, thus impinging on postembryonic growth capacity of the root meristem; this signaling pathway requires CRN and CLV2 and involves MAKR5 for its transduction/amplification. Triggers the accumulation of MAKR5 in developing sieve elements in a BAM3-dependent manner. Prevents, in a dose-dependent manner, auxin response in the root meristem thus leading in the repression of protophloem differentiation and periclinal sieve element precursor cell division. Promotes pollen tube growth prolongation in a SKM1 and SKM2-dependent manner, especially under relatively high temperature (at 30 degrees Celsius), thus conferring tolerance against high temperature probably through the maintenance of mitochondrial activity. Alleviates mitochondrial decay pollen tube in vitro culture. The chain is CLAVATA3/ESR (CLE)-related protein 45 from Arabidopsis thaliana (Mouse-ear cress).